The following is an 814-amino-acid chain: Immunoglobulin superfamily DCC subclass member 3 (814 aa).

The N-terminal stretch at 1–35 is a signal peptide; that stretch reads MAVQRAASPRRPPAPLWPRLLLPLLLLLLPAPSEG. 4 Ig-like C2-type domains span residues 36-139, 140-220, 238-321, and 329-416; these read LGHS…ATMS, DFHV…IRIS, PAIL…RTAQ, and PAEF…ARLT. Cystine bridges form between C63–C117 and C160–C209. N93 carries an N-linked (GlcNAc...) asparagine glycan. N246 is a glycosylation site (N-linked (GlcNAc...) asparagine). Cystine bridges form between C259-C307 and C351-C400. N-linked (GlcNAc...) asparagine glycosylation is found at N381 and N382. Fibronectin type-III domains lie at 426–520 and 523–618; these read PPRN…TLGE and APPP…ASER. 3 N-linked (GlcNAc...) asparagine glycosylation sites follow: N580, N604, and N634. The helical transmembrane segment at 641 to 661 threads the bilayer; the sequence is IVIGIHIGVTCIIFCVLFLLF. 2 disordered regions span residues 722–743 and 762–814; these read PPAS…APAP and GKTT…HSEQ. The segment covering 770-781 has biased composition (low complexity); it reads TEATAPCAGLAA.

The protein belongs to the immunoglobulin superfamily. DCC family.

The protein localises to the membrane. This is Immunoglobulin superfamily DCC subclass member 3 (IGDCC3) from Homo sapiens (Human).